A 515-amino-acid chain; its full sequence is Tyrosine decarboxylase 1 (515 aa).

2 repeat units span residues 81–138 (DDIT…TELE) and 141–192 (VTDW…GKDQ). The interval 81-192 (DDITNHIVPG…KVLNKIGKDQ (112 aa)) is 2 X approximate tandem repeats. A105 contacts substrate. The pyridoxal 5'-phosphate site is built by T169 and C170. H205 provides a ligand contact to substrate. 2 residues coordinate pyridoxal 5'-phosphate: T264 and N318. K321 carries the N6-(pyridoxal phosphate)lysine modification.

Belongs to the group II decarboxylase family. Requires pyridoxal 5'-phosphate as cofactor. Mostly expressed in bulbs, and, to a lower extent, in stems, roots, leaves and flowers.

The enzyme catalyses L-tyrosine + H(+) = tyramine + CO2. It participates in alkaloid biosynthesis. In terms of biological role, catalyzes the decarboxylation of L-tyrosine to tyramine, which is converted to norbelladine, a precursor to all Amaryllidaceae alkaloids such as galanthamine, lycorine and haemanthamine, and including haemanthamine- and crinamine-type alkaloids, promising anticancer agents. This chain is Tyrosine decarboxylase 1, found in Narcissus pseudonarcissus (Daffodil).